The sequence spans 248 residues: NADP-dependent 3-hydroxy acid dehydrogenase YdfG (248 aa).

Residues 7 to 12 (GATAGF), 32 to 33 (RR), 54 to 55 (DV), and Asn81 each bind NADP(+). Ser134 is a binding site for substrate. Residues Tyr147, Lys151, and 177 to 185 (PGLVGGTEF) contribute to the NADP(+) site. Tyr147 acts as the Proton acceptor in catalysis.

It belongs to the short-chain dehydrogenases/reductases (SDR) family. In terms of assembly, homotetramer.

The catalysed reaction is 3-hydroxypropanoate + NADP(+) = 3-oxopropanoate + NADPH + H(+). It catalyses the reaction L-allo-threonine + NADP(+) = aminoacetone + CO2 + NADPH. Functionally, NADP-dependent dehydrogenase with broad substrate specificity acting on 3-hydroxy acids. Catalyzes the NADP-dependent oxidation of L-allo-threonine to L-2-amino-3-keto-butyrate, which is spontaneously decarboxylated into aminoacetone. Also acts on D-threonine, L-serine, D-serine, D-3-hydroxyisobutyrate, L-3-hydroxyisobutyrate, D-glycerate and L-glycerate. Able to catalyze the reduction of the malonic semialdehyde to 3-hydroxypropionic acid. YdfG is apparently supplementing RutE, the presumed malonic semialdehyde reductase involved in pyrimidine degradation since both are able to detoxify malonic semialdehyde. The protein is NADP-dependent 3-hydroxy acid dehydrogenase YdfG of Escherichia coli O6:H1 (strain CFT073 / ATCC 700928 / UPEC).